Reading from the N-terminus, the 466-residue chain is 3-isopropylmalate dehydratase large subunit (466 aa).

C347, C407, and C410 together coordinate [4Fe-4S] cluster.

Belongs to the aconitase/IPM isomerase family. LeuC type 1 subfamily. In terms of assembly, heterodimer of LeuC and LeuD. Requires [4Fe-4S] cluster as cofactor.

The catalysed reaction is (2R,3S)-3-isopropylmalate = (2S)-2-isopropylmalate. The protein operates within amino-acid biosynthesis; L-leucine biosynthesis; L-leucine from 3-methyl-2-oxobutanoate: step 2/4. In terms of biological role, catalyzes the isomerization between 2-isopropylmalate and 3-isopropylmalate, via the formation of 2-isopropylmaleate. The chain is 3-isopropylmalate dehydratase large subunit from Shigella dysenteriae serotype 1 (strain Sd197).